The chain runs to 196 residues: uncharacterized protein (196 aa).

Residues 1–21 form the signal peptide; that stretch reads MNGKQCFCFFLFHLFYTGLFA. Residue C22 is the site of N-palmitoyl cysteine attachment. C22 carries the S-diacylglycerol cysteine lipid modification.

The protein localises to the cell membrane. This is an uncharacterized protein from Treponema pallidum (strain Nichols).